Here is a 351-residue protein sequence, read N- to C-terminus: UDP-N-acetylglucosamine--N-acetylmuramyl-(pentapeptide) pyrophosphoryl-undecaprenol N-acetylglucosamine transferase (351 aa).

UDP-N-acetyl-alpha-D-glucosamine-binding positions include 13–15 (TGG), asparagine 125, arginine 161, serine 189, isoleucine 241, 260–265 (ALTVCE), and glutamine 285.

The protein belongs to the glycosyltransferase 28 family. MurG subfamily.

It is found in the cell inner membrane. It catalyses the reaction di-trans,octa-cis-undecaprenyl diphospho-N-acetyl-alpha-D-muramoyl-L-alanyl-D-glutamyl-meso-2,6-diaminopimeloyl-D-alanyl-D-alanine + UDP-N-acetyl-alpha-D-glucosamine = di-trans,octa-cis-undecaprenyl diphospho-[N-acetyl-alpha-D-glucosaminyl-(1-&gt;4)]-N-acetyl-alpha-D-muramoyl-L-alanyl-D-glutamyl-meso-2,6-diaminopimeloyl-D-alanyl-D-alanine + UDP + H(+). The protein operates within cell wall biogenesis; peptidoglycan biosynthesis. Its function is as follows. Cell wall formation. Catalyzes the transfer of a GlcNAc subunit on undecaprenyl-pyrophosphoryl-MurNAc-pentapeptide (lipid intermediate I) to form undecaprenyl-pyrophosphoryl-MurNAc-(pentapeptide)GlcNAc (lipid intermediate II). This chain is UDP-N-acetylglucosamine--N-acetylmuramyl-(pentapeptide) pyrophosphoryl-undecaprenol N-acetylglucosamine transferase, found in Haemophilus influenzae (strain PittEE).